The following is a 143-amino-acid chain: Nucleoside diphosphate kinase (143 aa).

ATP is bound by residues lysine 11, phenylalanine 59, arginine 87, threonine 93, arginine 104, and asparagine 114. Residue histidine 117 is the Pros-phosphohistidine intermediate of the active site.

It belongs to the NDK family. Homotetramer. Mg(2+) is required as a cofactor.

The protein resides in the cytoplasm. The enzyme catalyses dZDP + ATP = dZTP + ADP. It catalyses the reaction a 2'-deoxyribonucleoside 5'-diphosphate + ATP = a 2'-deoxyribonucleoside 5'-triphosphate + ADP. It carries out the reaction a ribonucleoside 5'-diphosphate + ATP = a ribonucleoside 5'-triphosphate + ADP. Its pathway is purine metabolism. Functionally, major role in the synthesis of nucleoside triphosphates other than ATP. The ATP gamma phosphate is transferred to the NDP beta phosphate via a ping-pong mechanism, using a phosphorylated active-site intermediate. In terms of biological role, (Microbial infection) Catalyzes the phosphorylation of dZDP to dZTP, when the bacterium is infected by a phage that produces the substrate for the synthesis of dZTP (2- amino-2'-deoxyadenosine 5'-triphosphate), which is then used by the phage as a DNA polymerase substrate. This is Nucleoside diphosphate kinase from Acinetobacter baumannii (strain AB307-0294).